The following is a 1673-amino-acid chain: AF4/FMR2 family member lilli (1673 aa).

Disordered stretches follow at residues M1–N24, Y54–I80, S125–K302, Q407–N534, V575–W604, R722–L1086, Q1114–P1133, R1141–T1160, and K1187–E1315. The span at R71 to I80 shows a compositional bias: basic and acidic residues. 2 stretches are compositionally biased toward low complexity: residues S146–Q180 and P223–V244. T420 is modified (phosphothreonine). Positions L428–S441 are enriched in basic and acidic residues. Acidic residues predominate over residues L443–D454. Residues S450 and S452 each carry the phosphoserine modification. Over residues G465–N486 the composition is skewed to low complexity. The segment covering H491 to Q500 has biased composition (basic residues). Low complexity predominate over residues L501–Q525. Positions T577 to S586 are enriched in gly residues. Positions K594–W604 are enriched in polar residues. The span at S724–E757 shows a compositional bias: low complexity. Residues Q775–V788 are compositionally biased toward polar residues. Over residues Q802 to A812 the composition is skewed to basic residues. Phosphoserine is present on residues S821 and S822. Residues K851–S863 constitute a DNA-binding region (a.T hook). Residues Q860 to A898 are compositionally biased toward low complexity. Phosphoserine occurs at positions 871 and 873. Polar residues predominate over residues S909 to T919. Low complexity-rich tracts occupy residues S949–S965 and G993–S1004. Positions T1011–A1022 are enriched in polar residues. A compositionally biased stretch (low complexity) spans S1034–S1060. The span at E1065–K1082 shows a compositional bias: basic and acidic residues. Polar residues predominate over residues P1190–N1205. 2 stretches are compositionally biased toward basic and acidic residues: residues E1226–F1243 and F1252–P1282. S1362 carries the post-translational modification Phosphoserine. A Phosphothreonine modification is found at T1364. A compositionally biased stretch (low complexity) spans N1564–N1583. The disordered stretch occupies residues N1564 to R1588.

Belongs to the AF4 family. As to quaternary structure, component of the super elongation complex (SEC), at least composed of Ell, Cdk9, cyclin-T (CycT), lilli and ear.

The protein resides in the nucleus. Has a role in transcriptional regulation. Acts in parallel with the Ras/MAPK and the PI3K/PKB pathways in the control of cell identity and cellular growth. Essential for regulation of the cytoskeleton and cell growth but not for cell proliferation or growth rate. Required specifically for the microtubule-based basal transport of lipid droplets. Plays a partially redundant function downstream of Raf in cell fate specification in the developing eye. Pair-rule protein that regulates embryonic cellularization, gastrulation and segmentation. The chain is AF4/FMR2 family member lilli from Drosophila melanogaster (Fruit fly).